The chain runs to 724 residues: Ribosomal RNA large subunit methyltransferase K/L (724 aa).

One can recognise a THUMP domain in the interval 42-153; it reads DAQRLVLWSR…KGRATLSVDL (112 aa).

The protein belongs to the methyltransferase superfamily. RlmKL family.

It is found in the cytoplasm. The enzyme catalyses guanosine(2445) in 23S rRNA + S-adenosyl-L-methionine = N(2)-methylguanosine(2445) in 23S rRNA + S-adenosyl-L-homocysteine + H(+). The catalysed reaction is guanosine(2069) in 23S rRNA + S-adenosyl-L-methionine = N(2)-methylguanosine(2069) in 23S rRNA + S-adenosyl-L-homocysteine + H(+). In terms of biological role, specifically methylates the guanine in position 2445 (m2G2445) and the guanine in position 2069 (m7G2069) of 23S rRNA. The protein is Ribosomal RNA large subunit methyltransferase K/L of Xylella fastidiosa (strain M12).